We begin with the raw amino-acid sequence, 230 residues long: 5'-methylthioadenosine/S-adenosylhomocysteine nucleosidase (230 aa).

The Proton acceptor role is filled by Glu12. Substrate is bound by residues Gly78, Ile152, and 173–174 (ME). The active-site Proton donor is the Asp197.

This sequence belongs to the PNP/UDP phosphorylase family. MtnN subfamily.

It catalyses the reaction S-adenosyl-L-homocysteine + H2O = S-(5-deoxy-D-ribos-5-yl)-L-homocysteine + adenine. The catalysed reaction is S-methyl-5'-thioadenosine + H2O = 5-(methylsulfanyl)-D-ribose + adenine. The enzyme catalyses 5'-deoxyadenosine + H2O = 5-deoxy-D-ribose + adenine. It participates in amino-acid biosynthesis; L-methionine biosynthesis via salvage pathway; S-methyl-5-thio-alpha-D-ribose 1-phosphate from S-methyl-5'-thioadenosine (hydrolase route): step 1/2. Its function is as follows. Catalyzes the irreversible cleavage of the glycosidic bond in both 5'-methylthioadenosine (MTA) and S-adenosylhomocysteine (SAH/AdoHcy) to adenine and the corresponding thioribose, 5'-methylthioribose and S-ribosylhomocysteine, respectively. Also cleaves 5'-deoxyadenosine, a toxic by-product of radical S-adenosylmethionine (SAM) enzymes, into 5-deoxyribose and adenine. This is 5'-methylthioadenosine/S-adenosylhomocysteine nucleosidase from Haemophilus influenzae (strain 86-028NP).